We begin with the raw amino-acid sequence, 207 residues long: Histidine biosynthesis bifunctional protein HisIE (207 aa).

Positions 1–115 (MLSKKENLLK…FFLKENTLNF (115 aa)) are phosphoribosyl-AMP cyclohydrolase. The tract at residues 116–207 (LSKLEDLIED…NLKKRKTEKL (92 aa)) is phosphoribosyl-ATP pyrophosphohydrolase.

It in the N-terminal section; belongs to the PRA-CH family. This sequence in the C-terminal section; belongs to the PRA-PH family.

The protein localises to the cytoplasm. It carries out the reaction 1-(5-phospho-beta-D-ribosyl)-ATP + H2O = 1-(5-phospho-beta-D-ribosyl)-5'-AMP + diphosphate + H(+). The catalysed reaction is 1-(5-phospho-beta-D-ribosyl)-5'-AMP + H2O = 1-(5-phospho-beta-D-ribosyl)-5-[(5-phospho-beta-D-ribosylamino)methylideneamino]imidazole-4-carboxamide. It participates in amino-acid biosynthesis; L-histidine biosynthesis; L-histidine from 5-phospho-alpha-D-ribose 1-diphosphate: step 2/9. It functions in the pathway amino-acid biosynthesis; L-histidine biosynthesis; L-histidine from 5-phospho-alpha-D-ribose 1-diphosphate: step 3/9. In Buchnera aphidicola subsp. Schizaphis graminum (strain Sg), this protein is Histidine biosynthesis bifunctional protein HisIE (hisI).